The following is a 315-amino-acid chain: Acetyl-coenzyme A carboxylase carboxyl transferase subunit alpha (315 aa).

In terms of domain architecture, CoA carboxyltransferase C-terminal spans 40–293 (LQDKSKTLTE…RAELSSQLAM (254 aa)).

The protein belongs to the AccA family. Acetyl-CoA carboxylase is a heterohexamer composed of biotin carboxyl carrier protein (AccB), biotin carboxylase (AccC) and two subunits each of ACCase subunit alpha (AccA) and ACCase subunit beta (AccD).

The protein localises to the cytoplasm. The enzyme catalyses N(6)-carboxybiotinyl-L-lysyl-[protein] + acetyl-CoA = N(6)-biotinyl-L-lysyl-[protein] + malonyl-CoA. The protein operates within lipid metabolism; malonyl-CoA biosynthesis; malonyl-CoA from acetyl-CoA: step 1/1. Component of the acetyl coenzyme A carboxylase (ACC) complex. First, biotin carboxylase catalyzes the carboxylation of biotin on its carrier protein (BCCP) and then the CO(2) group is transferred by the carboxyltransferase to acetyl-CoA to form malonyl-CoA. The polypeptide is Acetyl-coenzyme A carboxylase carboxyl transferase subunit alpha (Pseudomonas fluorescens (strain Pf0-1)).